A 414-amino-acid polypeptide reads, in one-letter code: Serine hydroxymethyltransferase (414 aa).

(6S)-5,6,7,8-tetrahydrofolate contacts are provided by residues Leu-121 and 125–127; that span reads GHL. Lys-229 carries the N6-(pyridoxal phosphate)lysine modification.

Belongs to the SHMT family. As to quaternary structure, homodimer. The cofactor is pyridoxal 5'-phosphate.

The protein resides in the cytoplasm. It carries out the reaction (6R)-5,10-methylene-5,6,7,8-tetrahydrofolate + glycine + H2O = (6S)-5,6,7,8-tetrahydrofolate + L-serine. It participates in one-carbon metabolism; tetrahydrofolate interconversion. It functions in the pathway amino-acid biosynthesis; glycine biosynthesis; glycine from L-serine: step 1/1. Catalyzes the reversible interconversion of serine and glycine with tetrahydrofolate (THF) serving as the one-carbon carrier. This reaction serves as the major source of one-carbon groups required for the biosynthesis of purines, thymidylate, methionine, and other important biomolecules. Also exhibits THF-independent aldolase activity toward beta-hydroxyamino acids, producing glycine and aldehydes, via a retro-aldol mechanism. This is Serine hydroxymethyltransferase from Paracidovorax citrulli (strain AAC00-1) (Acidovorax citrulli).